A 287-amino-acid chain; its full sequence is 3-alpha-hydroxysteroid sulfotransferase (287 aa).

3'-phosphoadenylyl sulfate is bound at residue 44–49; that stretch reads KSGTNW. Residues W72 and W77 each contribute to the substrate site. The Proton acceptor role is filled by H99. 3'-phosphoadenylyl sulfate is bound by residues R121, S129, Y184, 218–223, and 247–249; these read SSFQFM and RKG.

It belongs to the sulfotransferase 1 family. In terms of assembly, homodimer. As to expression, adrenal gland and liver.

It is found in the cytoplasm. The enzyme catalyses an alcohol + 3'-phosphoadenylyl sulfate = an alkyl sulfate + adenosine 3',5'-bisphosphate + H(+). Its function is as follows. Sulfotransferase that utilizes 3'-phospho-5'-adenylyl sulfate (PAPS) as sulfonate donor to catalyze the sulfonation of 3-alpha-hydroxyl groups of neutral steroids. This chain is 3-alpha-hydroxysteroid sulfotransferase (STD1), found in Cavia porcellus (Guinea pig).